The following is a 422-amino-acid chain: Serine--tRNA ligase (422 aa).

Position 229–231 (229–231 (TAE)) interacts with L-serine. 260 to 262 (RKE) contributes to the ATP binding site. E283 lines the L-serine pocket. Position 347-350 (347-350 (EISS)) interacts with ATP. Position 383 (S383) interacts with L-serine.

The protein belongs to the class-II aminoacyl-tRNA synthetase family. Type-1 seryl-tRNA synthetase subfamily. Homodimer. The tRNA molecule binds across the dimer.

It localises to the cytoplasm. The catalysed reaction is tRNA(Ser) + L-serine + ATP = L-seryl-tRNA(Ser) + AMP + diphosphate + H(+). It carries out the reaction tRNA(Sec) + L-serine + ATP = L-seryl-tRNA(Sec) + AMP + diphosphate + H(+). It participates in aminoacyl-tRNA biosynthesis; selenocysteinyl-tRNA(Sec) biosynthesis; L-seryl-tRNA(Sec) from L-serine and tRNA(Sec): step 1/1. Catalyzes the attachment of serine to tRNA(Ser). Is also able to aminoacylate tRNA(Sec) with serine, to form the misacylated tRNA L-seryl-tRNA(Sec), which will be further converted into selenocysteinyl-tRNA(Sec). The sequence is that of Serine--tRNA ligase from Geotalea uraniireducens (strain Rf4) (Geobacter uraniireducens).